A 101-amino-acid polypeptide reads, in one-letter code: Replication restart protein PriB (101 aa).

Residues 1–101 (MTTNNLVLAG…LHAENVELKT (101 aa)) enclose the SSB domain.

It belongs to the PriB family. As to quaternary structure, homodimer. Interacts with PriA and DnaT. Component of the replication restart primosome. Primosome assembly occurs via a 'hand-off' mechanism. PriA binds to replication forks, subsequently PriB then DnaT bind; DnaT then displaces ssDNA to generate the helicase loading substrate.

Its function is as follows. Involved in the restart of stalled replication forks, which reloads the replicative helicase on sites other than the origin of replication; the PriA-PriB pathway is the major replication restart pathway. During primosome assembly it facilitates complex formation between PriA and DnaT on DNA; stabilizes PriA on DNA. Stimulates the DNA unwinding activity of PriA helicase. The polypeptide is Replication restart protein PriB (Shewanella halifaxensis (strain HAW-EB4)).